The primary structure comprises 187 residues: dCTP deaminase, dUMP-forming (187 aa).

DCTP is bound by residues 101–106, Asp119, 127–129, Gln148, Tyr162, Lys170, and Gln174; these read KSSLGR and TLE. Residue Glu129 is the Proton donor/acceptor of the active site.

Belongs to the dCTP deaminase family. As to quaternary structure, homotrimer.

It carries out the reaction dCTP + 2 H2O = dUMP + NH4(+) + diphosphate. Its pathway is pyrimidine metabolism; dUMP biosynthesis; dUMP from dCTP: step 1/1. Functionally, bifunctional enzyme that catalyzes both the deamination of dCTP to dUTP and the hydrolysis of dUTP to dUMP without releasing the toxic dUTP intermediate. The polypeptide is dCTP deaminase, dUMP-forming (Corynebacterium diphtheriae (strain ATCC 700971 / NCTC 13129 / Biotype gravis)).